The chain runs to 307 residues: DNA damage tolerance protein rad31 (307 aa).

Its function is as follows. Could be involved in a ubiquitin-related process important for DNA damage tolerance. Acts in a process which is defective in the checkpoint rad mutants and which involves hus5. This Schizosaccharomyces pombe (strain 972 / ATCC 24843) (Fission yeast) protein is DNA damage tolerance protein rad31 (rad31).